The sequence spans 290 residues: Protoheme IX farnesyltransferase 1 (290 aa).

A run of 8 helical transmembrane segments spans residues 8 to 28 (ITKPGIIFGNLISVAAGFFLA), 36 to 56 (FLLLLTTLVGVGLVIASGCVV), 85 to 105 (AAFVYALVLLLNGTALLFQVV), 108 to 128 (LSAVVVLLGYVFYVFFYTMWY), 131 to 151 (NSVYGTLVGSISGAVPPLVGY), 152 to 172 (LAVTNYISLEATLLFVMFCLW), 211 to 231 (AYVVAFGVVAIGLFMLGEAGY), and 269 to 289 (LLVVMGISGVLGLELIPLPFI).

The protein belongs to the UbiA prenyltransferase family. Protoheme IX farnesyltransferase subfamily.

It is found in the cell inner membrane. It catalyses the reaction heme b + (2E,6E)-farnesyl diphosphate + H2O = Fe(II)-heme o + diphosphate. The protein operates within porphyrin-containing compound metabolism; heme O biosynthesis; heme O from protoheme: step 1/1. In terms of biological role, converts heme B (protoheme IX) to heme O by substitution of the vinyl group on carbon 2 of heme B porphyrin ring with a hydroxyethyl farnesyl side group. This Vibrio campbellii (strain ATCC BAA-1116) protein is Protoheme IX farnesyltransferase 1.